Consider the following 409-residue polypeptide: Endoglucanase B (409 aa).

Substrate contacts are provided by residues His-61, 65 to 66 (WY), Tyr-92, and His-127. Catalysis depends on Glu-165, which acts as the Proton donor. A substrate-binding site is contributed by Tyr-228. Glu-254 serves as the catalytic Nucleophile. Substrate is bound by residues 260–261 (AT), Trp-288, and 293–295 (KDE). Residues 326–372 (IRESATTPPSDPTPPSDPDPGEPEPDPGEPDPTPPSDPGDYPAWDPN) are disordered. Residues 334–343 (PSDPTPPSDP) show a composition bias toward pro residues. The segment covering 344 to 354 (DPGEPEPDPGE) has biased composition (acidic residues).

The protein belongs to the glycosyl hydrolase 5 (cellulase A) family.

The enzyme catalyses Endohydrolysis of (1-&gt;4)-beta-D-glucosidic linkages in cellulose, lichenin and cereal beta-D-glucans.. This Evansella cellulosilytica (strain ATCC 21833 / DSM 2522 / FERM P-1141 / JCM 9156 / N-4) (Bacillus cellulosilyticus) protein is Endoglucanase B (celB).